The following is a 492-amino-acid chain: Ketol-acid reductoisomerase (NADP(+)) (492 aa).

A KARI N-terminal Rossmann domain is found at Ala15 to Ser208. NADP(+) contacts are provided by residues Cys45 to Gln48, Arg68, Arg76, Ser78, and Asp108 to Gln110. His132 is an active-site residue. NADP(+) is bound at residue Gly158. 2 KARI C-terminal knotted domains span residues Ser209–Glu344 and Tyr345–Met485. Residues Asp217, Glu221, Glu389, and Glu393 each coordinate Mg(2+). Ser414 is a substrate binding site.

Belongs to the ketol-acid reductoisomerase family. The cofactor is Mg(2+).

It catalyses the reaction (2R)-2,3-dihydroxy-3-methylbutanoate + NADP(+) = (2S)-2-acetolactate + NADPH + H(+). It carries out the reaction (2R,3R)-2,3-dihydroxy-3-methylpentanoate + NADP(+) = (S)-2-ethyl-2-hydroxy-3-oxobutanoate + NADPH + H(+). It functions in the pathway amino-acid biosynthesis; L-isoleucine biosynthesis; L-isoleucine from 2-oxobutanoate: step 2/4. It participates in amino-acid biosynthesis; L-valine biosynthesis; L-valine from pyruvate: step 2/4. Functionally, involved in the biosynthesis of branched-chain amino acids (BCAA). Catalyzes an alkyl-migration followed by a ketol-acid reduction of (S)-2-acetolactate (S2AL) to yield (R)-2,3-dihydroxy-isovalerate. In the isomerase reaction, S2AL is rearranged via a Mg-dependent methyl migration to produce 3-hydroxy-3-methyl-2-ketobutyrate (HMKB). In the reductase reaction, this 2-ketoacid undergoes a metal-dependent reduction by NADPH to yield (R)-2,3-dihydroxy-isovalerate. The chain is Ketol-acid reductoisomerase (NADP(+)) from Photorhabdus laumondii subsp. laumondii (strain DSM 15139 / CIP 105565 / TT01) (Photorhabdus luminescens subsp. laumondii).